The chain runs to 388 residues: tRNA(Ile)-lysidine synthase (388 aa).

51–56 (SGGRDS) is an ATP binding site.

The protein belongs to the tRNA(Ile)-lysidine synthase family.

The protein resides in the cytoplasm. The catalysed reaction is cytidine(34) in tRNA(Ile2) + L-lysine + ATP = lysidine(34) in tRNA(Ile2) + AMP + diphosphate + H(+). Ligates lysine onto the cytidine present at position 34 of the AUA codon-specific tRNA(Ile) that contains the anticodon CAU, in an ATP-dependent manner. Cytidine is converted to lysidine, thus changing the amino acid specificity of the tRNA from methionine to isoleucine. The sequence is that of tRNA(Ile)-lysidine synthase from Bifidobacterium longum (strain DJO10A).